Here is a 95-residue protein sequence, read N- to C-terminus: Co-chaperonin GroES (95 aa).

This sequence belongs to the GroES chaperonin family. As to quaternary structure, heptamer of 7 subunits arranged in a ring. Interacts with the chaperonin GroEL.

It localises to the cytoplasm. Its function is as follows. Together with the chaperonin GroEL, plays an essential role in assisting protein folding. The GroEL-GroES system forms a nano-cage that allows encapsulation of the non-native substrate proteins and provides a physical environment optimized to promote and accelerate protein folding. GroES binds to the apical surface of the GroEL ring, thereby capping the opening of the GroEL channel. This is Co-chaperonin GroES from Rickettsia prowazekii (strain Madrid E).